The primary structure comprises 364 residues: MPDKPDRNAIEVVNVSKIFGSGEGQVAALDKVSVSIRENEFFTLLGPSGCGKTTLLRLIAGFDFPTAGEILLYGQDIAPLPPFKRPVNTVFQSYALFPHMTVADNIGFGLEMLGKPKAEIKARVAEMLKLVKMEALAGRRTAQISGGQQQRVALARALAPQPKVLLLDEPLSALDYKLRKEMQIELKRLQHETGITFIFVTHDQEEALTMSDRIAVMSSGKILQVGSPWDIYDKPAERFVADFIGETNFLTAAISGTGNGKTRATLKSGTTIEATVAEGFQPKDNATVVVRPEHAKLTKDKGDLSGTVENIVYFGTDTHIHVQLDSGEAFTVRQQNTRSAGCGFDRGDKVGILIGNDAAQVLRD.

The ABC transporter domain occupies 10 to 244; the sequence is IEVVNVSKIF…PAERFVADFI (235 aa). 46–53 serves as a coordination point for ATP; the sequence is GPSGCGKT.

This sequence belongs to the ABC transporter superfamily. Spermidine/putrescine importer (TC 3.A.1.11.1) family. The complex is composed of two ATP-binding proteins (PotA), two transmembrane proteins (PotB and PotC) and a solute-binding protein (PotD).

The protein resides in the cell inner membrane. It catalyses the reaction ATP + H2O + polyamine-[polyamine-binding protein]Side 1 = ADP + phosphate + polyamineSide 2 + [polyamine-binding protein]Side 1.. Functionally, part of the ABC transporter complex PotABCD involved in spermidine/putrescine import. Responsible for energy coupling to the transport system. The chain is Spermidine/putrescine import ATP-binding protein PotA from Mesorhizobium japonicum (strain LMG 29417 / CECT 9101 / MAFF 303099) (Mesorhizobium loti (strain MAFF 303099)).